Consider the following 125-residue polypeptide: MDKQVRNTTEIVRLAKQKSKKTREKVDKAISKFSIEGKVINFNSIAKEANVSKSWLYKEHDIRQRIESLRERQITANVVSKPKKSSRSEEILIKTLKRRVMELEKENKKLQNQIQKLYGDLYNKE.

One of three proteins encoded by transposon Tn554 required for its transposition. The protein is Transposase for transposon Tn554 (tnpC1) of Staphylococcus aureus (strain Mu50 / ATCC 700699).